The following is a 472-amino-acid chain: Kynureninase 1 (472 aa).

Pyridoxal 5'-phosphate-binding positions include leucine 146, threonine 147, 174–177 (FPSD), serine 231, aspartate 260, histidine 263, and tyrosine 285. N6-(pyridoxal phosphate)lysine is present on lysine 286. Pyridoxal 5'-phosphate contacts are provided by tryptophan 326 and asparagine 354.

Belongs to the kynureninase family. In terms of assembly, homodimer. The cofactor is pyridoxal 5'-phosphate.

The protein resides in the cytoplasm. It catalyses the reaction L-kynurenine + H2O = anthranilate + L-alanine + H(+). It carries out the reaction 3-hydroxy-L-kynurenine + H2O = 3-hydroxyanthranilate + L-alanine + H(+). It participates in amino-acid degradation; L-kynurenine degradation; L-alanine and anthranilate from L-kynurenine: step 1/1. The protein operates within cofactor biosynthesis; NAD(+) biosynthesis; quinolinate from L-kynurenine: step 2/3. Functionally, catalyzes the cleavage of L-kynurenine (L-Kyn) and L-3-hydroxykynurenine (L-3OHKyn) into anthranilic acid (AA) and 3-hydroxyanthranilic acid (3-OHAA), respectively. This is Kynureninase 1 (bna5-1) from Aspergillus niger (strain ATCC MYA-4892 / CBS 513.88 / FGSC A1513).